Consider the following 449-residue polypeptide: N-succinylarginine dihydrolase (449 aa).

Substrate contacts are provided by residues 19–28 (GGLSYGNVAS), N110, and 137–138 (HR). Positions 23–43 (YGNVASQSNSQQASNPREAAR) are disordered. Residues 27–37 (ASQSNSQQASN) are compositionally biased toward low complexity. The active site involves E174. Position 214 (R214) interacts with substrate. The active site involves H250. Substrate-binding residues include D252 and N365. The active-site Nucleophile is the C371.

The protein belongs to the succinylarginine dihydrolase family. As to quaternary structure, homodimer.

The enzyme catalyses N(2)-succinyl-L-arginine + 2 H2O + 2 H(+) = N(2)-succinyl-L-ornithine + 2 NH4(+) + CO2. The protein operates within amino-acid degradation; L-arginine degradation via AST pathway; L-glutamate and succinate from L-arginine: step 2/5. Its function is as follows. Catalyzes the hydrolysis of N(2)-succinylarginine into N(2)-succinylornithine, ammonia and CO(2). The polypeptide is N-succinylarginine dihydrolase (Pseudomonas putida (strain ATCC 47054 / DSM 6125 / CFBP 8728 / NCIMB 11950 / KT2440)).